Here is a 499-residue protein sequence, read N- to C-terminus: Bifunctional purine biosynthesis protein PurH (499 aa).

Positions 1–144 (MIKRALISVF…KNFKDVVVLT (144 aa)) constitute an MGS-like domain.

The protein belongs to the PurH family.

The catalysed reaction is (6R)-10-formyltetrahydrofolate + 5-amino-1-(5-phospho-beta-D-ribosyl)imidazole-4-carboxamide = 5-formamido-1-(5-phospho-D-ribosyl)imidazole-4-carboxamide + (6S)-5,6,7,8-tetrahydrofolate. It carries out the reaction IMP + H2O = 5-formamido-1-(5-phospho-D-ribosyl)imidazole-4-carboxamide. It functions in the pathway purine metabolism; IMP biosynthesis via de novo pathway; 5-formamido-1-(5-phospho-D-ribosyl)imidazole-4-carboxamide from 5-amino-1-(5-phospho-D-ribosyl)imidazole-4-carboxamide (10-formyl THF route): step 1/1. Its pathway is purine metabolism; IMP biosynthesis via de novo pathway; IMP from 5-formamido-1-(5-phospho-D-ribosyl)imidazole-4-carboxamide: step 1/1. This Clostridium botulinum (strain 657 / Type Ba4) protein is Bifunctional purine biosynthesis protein PurH.